We begin with the raw amino-acid sequence, 265 residues long: Cytochrome c oxidase subunit 3 (265 aa).

6 helical membrane-spanning segments follow: residues 41–61 (GGATLLSLGLIFILYTMFVWW), 85–105 (GFILFIVSEVMFFFAFFWAFF), 137–157 (TLILLSSGAAVTWAHHAILAG), 162–182 (AVYALVATVLLALVFTGFQGM), 200–220 (FFLATGFHGFHVIIGTLFLIV), and 245–265 (WHFVDVVWLFLFVSIYWWGGI).

Belongs to the cytochrome c oxidase subunit 3 family. Component of the cytochrome c oxidase (complex IV, CIV), a multisubunit enzyme composed of a catalytic core of 3 subunits and several supernumerary subunits. The complex exists as a monomer or a dimer and forms supercomplexes (SCs) in the inner mitochondrial membrane with ubiquinol-cytochrome c oxidoreductase (cytochrome b-c1 complex, complex III, CIII).

It is found in the mitochondrion inner membrane. The catalysed reaction is 4 Fe(II)-[cytochrome c] + O2 + 8 H(+)(in) = 4 Fe(III)-[cytochrome c] + 2 H2O + 4 H(+)(out). Functionally, component of the cytochrome c oxidase, the last enzyme in the mitochondrial electron transport chain which drives oxidative phosphorylation. The respiratory chain contains 3 multisubunit complexes succinate dehydrogenase (complex II, CII), ubiquinol-cytochrome c oxidoreductase (cytochrome b-c1 complex, complex III, CIII) and cytochrome c oxidase (complex IV, CIV), that cooperate to transfer electrons derived from NADH and succinate to molecular oxygen, creating an electrochemical gradient over the inner membrane that drives transmembrane transport and the ATP synthase. Cytochrome c oxidase is the component of the respiratory chain that catalyzes the reduction of oxygen to water. Electrons originating from reduced cytochrome c in the intermembrane space (IMS) are transferred via the dinuclear copper A center (CU(A)) of subunit 2 and heme A of subunit 1 to the active site in subunit 1, a binuclear center (BNC) formed by heme A3 and copper B (CU(B)). The BNC reduces molecular oxygen to 2 water molecules using 4 electrons from cytochrome c in the IMS and 4 protons from the mitochondrial matrix. In Triticum aestivum (Wheat), this protein is Cytochrome c oxidase subunit 3 (COX3).